The primary structure comprises 417 residues: MGLTLTQKILSAKVGREVKPGELIEVDVDMVLGNDVTAPVAIKEFEKIGIDRVFDNTKIALVPDHFVPNKDIKSAEQVNIMRKFAKKHGIVNFFEVGQMGIEHALLPEKGLVLPGDVVIGADSHTCTYGALTCFSTGVGSTDMAAAMATGKAWFKVPEAIKFVLKGNLQKWVSGKDVILYIIGKIGVDGALYKSMEFTGNIKALSMDDRFTIANMAIEAGAKNGIFDFDEITEAYVKGRAKREYKVFERDVDAEYSEVYEISLDEIRPQVAFPHLPENTRNIDEVGKVKIDQVVIGSCTNGRISDMEIAYKILKGKKVHPDVRLLIFPATQEIYLECVKRGYIEEFIKAGAAVSTPTCGPCLGGHMGILAKGERALATTNRNFVGRMGHPESEVYLSSPAVAAASAIAGYIVSPEEV.

[4Fe-4S] cluster is bound by residues Cys-298, Cys-358, and Cys-361.

This sequence belongs to the aconitase/IPM isomerase family. LeuC type 2 subfamily. In terms of assembly, heterodimer of LeuC and LeuD. Requires [4Fe-4S] cluster as cofactor.

It carries out the reaction (2R,3S)-3-isopropylmalate = (2S)-2-isopropylmalate. It participates in amino-acid biosynthesis; L-leucine biosynthesis; L-leucine from 3-methyl-2-oxobutanoate: step 2/4. Its function is as follows. Catalyzes the isomerization between 2-isopropylmalate and 3-isopropylmalate, via the formation of 2-isopropylmaleate. This is 3-isopropylmalate dehydratase large subunit from Thermoanaerobacter pseudethanolicus (strain ATCC 33223 / 39E) (Clostridium thermohydrosulfuricum).